Here is a 176-residue protein sequence, read N- to C-terminus: Photosystem I assembly protein Ycf4 (176 aa).

The next 2 membrane-spanning stretches (helical) occupy residues 22-42 (FLWA…GTAS) and 57-77 (VMTF…SMLF).

Belongs to the Ycf4 family.

It localises to the plastid thylakoid membrane. Seems to be required for the assembly of the photosystem I complex. The polypeptide is Photosystem I assembly protein Ycf4 (Cuscuta obtusiflora (Peruvian dodder)).